The primary structure comprises 190 residues: Jupiter microtubule associated homolog 2 (190 aa).

Met1 carries the post-translational modification N-acetylmethionine. Over residues Met1–Arg15 the composition is skewed to polar residues. The interval Met1–Tyr190 is disordered. Residue Lys11 is modified to N6-acetyllysine. Ser30 carries the post-translational modification Phosphoserine. The span at Ile35 to Ala44 shows a compositional bias: polar residues. Ser45, Ser69, and Ser97 each carry phosphoserine. 2 stretches are compositionally biased toward basic and acidic residues: residues Lys110–Ala129 and Glu138–Ile153. Ser144 is subject to Phosphoserine.

This sequence belongs to the JUPITER family. As to quaternary structure, monomer. Dimer. Interacts with TPCN1.

The protein resides in the cytoplasm. Its subcellular location is the nucleus. Nicotinic acid adenine dinucleotide phosphate (NAADP) binding protein required for NAADP-evoked intracellular calcium release. Confers NAADP-sensitivity to the two pore channels (TPCs) complex. Enables NAADP to activate Ca(2+) release from the endoplasmic reticulum through ryanodine receptors. In Mus musculus (Mouse), this protein is Jupiter microtubule associated homolog 2.